Reading from the N-terminus, the 300-residue chain is Arginine/serine-rich protein 1 (300 aa).

The interval 1-142 (MSSAAVSKYV…RGRSHHRRSY (142 aa)) is disordered. Ser-17 is subject to Phosphoserine. Over residues 23 to 36 (SPSTSGSGRSSRLS) the composition is skewed to low complexity. A compositionally biased stretch (basic residues) spans 37 to 104 (SRSRSRSSSR…RSRSRSRGHR (68 aa)). Residues 105-115 (YYRDSRYEQPR) show a composition bias toward basic and acidic residues. Low complexity predominate over residues 116–125 (RYYQSPSPYR). Phosphoserine occurs at positions 120 and 122. Basic residues predominate over residues 126–141 (SRSRSRSRGRSHHRRS). Arg-147 is modified (omega-N-methylarginine). The disordered stretch occupies residues 222 to 300 (QGAVSCSGPK…KSPYGLWIPV (79 aa)). Over residues 268–277 (PLEKTTKAAV) the composition is skewed to basic and acidic residues. At Ser-284 the chain carries Phosphoserine.

It belongs to the RSRP family. Phosphorylated. Phosphorylation at Ser-120 and Ser-122 mediates the interaction with spliceosome proteins.

The protein localises to the nucleus. Its function is as follows. Probably acts as a spliceosomal factor that contributes to spliceosome assembly and regulates the isoform switching of proteins such as PARP6. This Rattus norvegicus (Rat) protein is Arginine/serine-rich protein 1 (Rsrp1).